We begin with the raw amino-acid sequence, 238 residues long: Sugar fermentation stimulation protein homolog (238 aa).

The protein belongs to the SfsA family.

The polypeptide is Sugar fermentation stimulation protein homolog (Actinobacillus succinogenes (strain ATCC 55618 / DSM 22257 / CCUG 43843 / 130Z)).